Here is a 90-residue protein sequence, read N- to C-terminus: DNA-binding protein HU-beta (90 aa).

It belongs to the bacterial histone-like protein family. As to quaternary structure, heterodimer of an alpha and a beta chain.

Histone-like DNA-binding protein which is capable of wrapping DNA to stabilize it, and thus to prevent its denaturation under extreme environmental conditions. The protein is DNA-binding protein HU-beta (hupB) of Serratia marcescens.